Here is a 32-residue protein sequence, read N- to C-terminus: Photosystem I reaction center subunit XII (32 aa).

Residues 4 to 26 form a helical membrane-spanning segment; sequence ISDSQIIVILLSVFITSILALRL.

The protein belongs to the PsaM family.

The protein resides in the plastid. It is found in the chloroplast thylakoid membrane. This chain is Photosystem I reaction center subunit XII, found in Marchantia polymorpha (Common liverwort).